The primary structure comprises 515 residues: Membrane-bound transcription factor site-2 protease (515 aa).

Topologically, residues 1 to 3 (MIP) are cytoplasmic. The chain crosses the membrane as a helical span at residues 4–24 (VSLLVVVVGGWTAVYLADLVL). The Lumenal portion of the chain corresponds to 25–74 (KSSVYFKHSYEDWLENNGLSISPFHIRWQTSIFNRAFYSWGRRKARMLYQ). The next 2 membrane-spanning stretches (helical) occupy residues 75 to 95 (WFNF…FLLG) and 96 to 107 (KTLMQTLAQMMA). Topologically, residues 108–140 (DSPSPYSSSSSSSSSSSSSSSSSSSLHNEQVLQ) are lumenal. The chain crosses the membrane as a helical span at residues 141–165 (VVVPGINLPVNQLTYFFAAVLISGV). A Zn(2+)-binding site is contributed by H167. E168 is an active-site residue. A run of 3 helical transmembrane segments spans residues 170-182 (GHGI…QVRF), 183-205 (NGFG…TTHL), and 225-247 (FVLA…PFYY). H171 lines the Zn(2+) pocket. Residues 248-442 (TGVGVLITEV…LPVIVETFVK (195 aa)) lie on the Lumenal side of the membrane. N333 carries an N-linked (GlcNAc...) asparagine glycan. The next 2 helical transmembrane spans lie at 443–460 (YLIS…VPCF) and 461–472 (ALDGQWILNSFL). The Lumenal portion of the chain corresponds to 473–488 (DATLTSVIGDNDVKDL). Residues 489 to 509 (IGFFILLGGSVLLAANVTLGL) form a helical membrane-spanning segment. Residues 510 to 515 (WMVTAR) are Cytoplasmic-facing.

Belongs to the peptidase M50A family. The cofactor is Zn(2+).

It localises to the membrane. The protein localises to the cytoplasm. It is found in the golgi apparatus membrane. The enzyme catalyses Cleaves several transcription factors that are type-2 transmembrane proteins within membrane-spanning domains. Known substrates include sterol regulatory element-binding protein (SREBP) -1, SREBP-2 and forms of the transcriptional activator ATF6. SREBP-2 is cleaved at the site 477-DRSRILL-|-CVLTFLCLSFNPLTSLLQWGGA-505. The residues Asn-Pro, 11 residues distal to the site of cleavage in the membrane-spanning domain, are important for cleavage by S2P endopeptidase. Replacement of either of these residues does not prevent cleavage, but there is no cleavage if both of these residues are replaced.. Zinc metalloprotease that mediates intramembrane proteolysis of proteins such as ATF6, ATF6B, SREBF1/SREBP1 and SREBF2/SREBP2. Catalyzes the second step in the proteolytic activation of the sterol regulatory element-binding proteins (SREBPs) SREBF1/SREBP1 and SREBF2/SREBP2: cleaves SREBPs within the first transmembrane segment, thereby releasing the N-terminal segment with a portion of the transmembrane segment attached. Mature N-terminal SREBP fragments shuttle to the nucleus and activate gene transcription. Also mediates the second step in the proteolytic activation of the cyclic AMP-dependent transcription factor ATF-6 (ATF6 and ATF6B). Involved in intramembrane proteolysis during bone formation. In astrocytes and osteoblasts, upon DNA damage and ER stress, mediates the second step of the regulated intramembrane proteolytic activation of the transcription factor CREB3L1, leading to the inhibition of cell-cycle progression. This Mus musculus (Mouse) protein is Membrane-bound transcription factor site-2 protease (Mbtps2).